The primary structure comprises 164 residues: UPF0114 protein YqhA (164 aa).

3 helical membrane-spanning segments follow: residues 15–35 (LLAP…LKFF), 53–73 (LILV…LVMV), and 136–156 (LMWY…MGYL).

It belongs to the UPF0114 family.

The protein resides in the cell membrane. This Salmonella agona (strain SL483) protein is UPF0114 protein YqhA.